The following is a 52-amino-acid chain: UPF0181 protein VPA0916 (52 aa).

Belongs to the UPF0181 family.

In Vibrio parahaemolyticus serotype O3:K6 (strain RIMD 2210633), this protein is UPF0181 protein VPA0916.